The chain runs to 228 residues: Prolactin-2B1 (228 aa).

The first 31 residues, 1 to 31, serve as a signal peptide directing secretion; the sequence is MLLYLPQIFSSRASSLLFLVPYLLFWENVAS. 2 disulfide bridges follow: Cys-89–Cys-194 and Cys-203–Cys-228. Residue Asn-173 is glycosylated (N-linked (GlcNAc...) asparagine).

It belongs to the somatotropin/prolactin family. In terms of tissue distribution, expression restricted to the placenta in trophoblast cells within the labyrinth zone.

The protein localises to the secreted. This Rattus norvegicus (Rat) protein is Prolactin-2B1 (Prl2b1).